The primary structure comprises 893 residues: Alanine--tRNA ligase (893 aa).

4 residues coordinate Zn(2+): His-574, His-578, Cys-678, and His-682.

Belongs to the class-II aminoacyl-tRNA synthetase family. It depends on Zn(2+) as a cofactor.

It localises to the cytoplasm. The enzyme catalyses tRNA(Ala) + L-alanine + ATP = L-alanyl-tRNA(Ala) + AMP + diphosphate. In terms of biological role, catalyzes the attachment of alanine to tRNA(Ala) in a two-step reaction: alanine is first activated by ATP to form Ala-AMP and then transferred to the acceptor end of tRNA(Ala). Also edits incorrectly charged Ser-tRNA(Ala) and Gly-tRNA(Ala) via its editing domain. The polypeptide is Alanine--tRNA ligase (Bifidobacterium longum (strain NCC 2705)).